The following is a 618-amino-acid chain: MELDDILDAGRGDRLFLLGNEAAVRAAIESGVGVASTYPGTPSSEIGNVLSKIAKRAGIYFEFSINEKVALEVAAAAAASGVRSFTFMKHVGLNVASDSFMSVAYTGVRAGMVVLSADDPSMFSSQNEQDNRHYARLAWVPLLEPSNPQEILEYMNHAFELSEEYRIPVLLRTTTRVSHMRGVVEAGERRAEPVKGFFRKNPEQFVPVPATARVMRRELVEKMKKLKRVADTSELNRVLNEDSESDLGIIASGGAFNYVYDALQTLGLDVPVLKLGFTYPFPAGLVAEFLSGLEGVLVVEEVDSVMEKEVLAVATSEGLDVGVHGKLDGTLPEIYEYSEDIVRRAISGLTGIKSHEKGIEAPELPERPPALCPGCPHRAMYYSVRRAASELGIEGEDLIFPTDIGCYTLGIEPPYSAADYLLSMGSSVGTACGFSAATSQRIVSFIGDSTFFHAGIPPLINAVHNRQRFVLVILDNRTTAMTGGQPHPGLPVDGMGEEAPAISIEDITRACGVEFVETVNPMNIRRSSETIRRALQHESVAVVISRYPCMLSEGAVRGRPVRVDEEKCDLCLECLNELACPAIVEEDGRVFIDPLYCRGCTICLQICPAGAIKPEGKR.

4Fe-4S ferredoxin-type domains are found at residues 559–590 (RPVR…DGRV) and 588–617 (GRVF…PEGK). Positions 568, 571, 574, 580, 597, 600, 603, and 607 each coordinate [4Fe-4S] cluster.

Heterodimer of the IorA and IorB subunits. The cofactor is [4Fe-4S] cluster.

It catalyses the reaction indole-3-pyruvate + 2 oxidized [2Fe-2S]-[ferredoxin] + CoA = (indol-3-yl)acetyl-CoA + 2 reduced [2Fe-2S]-[ferredoxin] + CO2 + H(+). In terms of biological role, catalyzes the ferredoxin-dependent oxidative decarboxylation of arylpyruvates. This chain is Indolepyruvate oxidoreductase subunit IorA (iorA), found in Methanothermobacter marburgensis (strain ATCC BAA-927 / DSM 2133 / JCM 14651 / NBRC 100331 / OCM 82 / Marburg) (Methanobacterium thermoautotrophicum).